A 714-amino-acid chain; its full sequence is Protein spire homolog 2 (714 aa).

The KIND domain occupies 22-203; sequence LSLEEVLKAY…RALFVETLEL (182 aa). Residues 136–162 form a disordered region; the sequence is DSEDSGCGAADEGYGGPEEEEEAEGVP. 3 WH2 domains span residues 248 to 262, 278 to 296, and 342 to 359; these read QLMR…LKKV, PFEM…LRKV, and LHEK…LRPV. A phosphoserine mark is found at Ser-371, Ser-440, Ser-442, and Ser-476. The disordered stretch occupies residues 453–516; sequence VASGLQSATH…SSGDRPEASM (64 aa). A compositionally biased stretch (polar residues) spans 486 to 496; that stretch reads DQGTCPASVSD. The spir-box stretch occupies residues 534-554; sequence LALTVEEVMDVRRVLVKAEME.

It belongs to the spire family.

It is found in the cytoplasm. Its subcellular location is the cytoskeleton. It localises to the cytosol. The protein resides in the cell membrane. The protein localises to the cytoplasmic vesicle membrane. Functionally, acts as an actin nucleation factor, remains associated with the slow-growing pointed end of the new filament. Involved in intracellular vesicle transport along actin fibers, providing a novel link between actin cytoskeleton dynamics and intracellular transport. Required for asymmetric spindle positioning and asymmetric cell division during meiosis. Required for normal formation of the cleavage furrow and for polar body extrusion during female germ cell meiosis. Also acts in the nucleus: together with SPIRE1 and SPIRE2, promotes assembly of nuclear actin filaments in response to DNA damage in order to facilitate movement of chromatin and repair factors after DNA damage. This chain is Protein spire homolog 2 (SPIRE2), found in Homo sapiens (Human).